The chain runs to 142 residues: Protein E6 (142 aa).

2 zinc fingers span residues 27 to 63 (CIFCKFSVSIVDLASFHNKRLSVIWRDNTPFACCTKC) and 100 to 136 (CQHCYSFLDYLEKLYHLYNDVDFLLIRGTWRGVCRNC).

The protein belongs to the papillomaviridae E6 protein family. Forms homodimers. Interacts with ubiquitin-protein ligase UBE3A/E6-AP; this interaction stimulates UBE3A ubiquitin activity. Interacts with host BAK1.

Its subcellular location is the host cytoplasm. The protein localises to the host nucleus. Its function is as follows. Plays a major role in the induction and maintenance of cellular transformation. E6 associates with host UBE3A/E6-AP ubiquitin-protein ligase and modulates its activity. Protects host keratinocytes from apoptosis by mediating the degradation of host BAK1. May also inhibit host immune response. This Homo sapiens (Human) protein is Protein E6.